The sequence spans 115 residues: Cholecystokinin (115 aa).

The signal sequence occupies residues 1 to 20 (MNSGVCLCVLMAVLAAGALT). Residues 21–44 (QPVPPADPAGSGLQRAEEAPRRQL) constitute a propeptide that is removed on maturation. A disordered region spans residues 23-52 (VPPADPAGSGLQRAEEAPRRQLRVSQRTDG). O-linked (Xyl...) (chondroitin sulfate) serine glycosylation is present at Ser31. Tyr97 bears the Sulfotyrosine mark. A Phenylalanine amide modification is found at Phe103. Positions 107 to 115 (SAEEYEYPS) are excised as a propeptide. Tyr111 and Tyr113 each carry sulfotyrosine.

The protein belongs to the gastrin/cholecystokinin family. As to quaternary structure, binds to CCK-A receptors in the pancreas and CCK-B receptors in the brain. In terms of processing, the precursor is cleaved by proteases to produce a number of active cholecystokinins. Post-translationally, the precursor is cleaved by ACE, which removes the Gly-Arg-Arg peptide at the C-terminus, leading to mature hormone. Detected in cerebrospinal fluid and urine (at protein level).

Its subcellular location is the secreted. In terms of biological role, this peptide hormone induces gall bladder contraction and the release of pancreatic enzymes in the gut. Its function in the brain is not clear. Binding to CCK-A receptors stimulates amylase release from the pancreas, binding to CCK-B receptors stimulates gastric acid secretion. This is Cholecystokinin (CCK) from Homo sapiens (Human).